The following is a 411-amino-acid chain: MSQPLPPGWTEHKAPSGIPYYWNAELKKSTYQRPSFIEKNHSSSVTASQASLAFNTSEKLFVNENAEERKNSRDLRKQLPDRPKFKKRIPNNDSWVVVFTKKNRYFFHNLKSHESYWEPPLEISKDLKILRLPIRKQISKDSSQSQNVDSGKTNHEEIHESRHLQTEIEEPSGLEESSEESVLYSEEFYEKSDEEEDEEKSHSAEELEFGEEDIMYQLQQLDDETVSYDIQEQATNLSTDDARRVFTELLKDKNIGAYQPWELVYPKLLDDDRFYVLDSGERRKEVFEEYCKSVVSTKKITRRKNTLSDFWTLLHSLPSTLLWPQFKRKYRKSSTLQIPGYSERDFEKLFREFQILRKQPMQDKLLNFKKLCKSKTVDPKNPDEFTESILNDTRYAVLTREELDSLACSSN.

Positions glutamine 3–phenylalanine 36 constitute a WW 1 domain. Residues asparagine 65–lysine 84 are disordered. The span at alanine 66–proline 83 shows a compositional bias: basic and acidic residues. Positions isoleucine 89–glutamate 122 constitute a WW 2 domain. The disordered stretch occupies residues isoleucine 138–phenylalanine 209. Over residues lysine 140–glycine 151 the composition is skewed to polar residues. Residues lysine 152–threonine 166 are compositionally biased toward basic and acidic residues. Acidic residues predominate over residues glutamate 167–glutamate 179. The FF domain maps to threonine 239–serine 293.

Component of the spliceosomal complex. Interacts with prp19.

The protein localises to the nucleus. Its function is as follows. Component of the spliceosome involved in mRNA processing. The polypeptide is Pre-mRNA-splicing factor dre4 (dre4) (Schizosaccharomyces pombe (strain 972 / ATCC 24843) (Fission yeast)).